The chain runs to 151 residues: UPF0756 membrane protein lhv_0995 (151 aa).

Helical transmembrane passes span 4-24 (WLFL…SLII), 25-45 (ATGV…LPVI), 52-72 (WGVT…QIGF), 78-98 (TFKS…AILS), and 115-135 (LVLG…GPVI).

Belongs to the UPF0756 family.

The protein resides in the cell membrane. This chain is UPF0756 membrane protein lhv_0995, found in Lactobacillus helveticus (strain DPC 4571).